The primary structure comprises 563 residues: Methylcrotonoyl-CoA carboxylase beta chain, mitochondrial (563 aa).

Residues 1-22 constitute a mitochondrion transit peptide; that stretch reads MWGALRSALRPCCRAAVPPQRA. A CoA carboxyltransferase N-terminal domain is found at 49 to 306; sequence MKALVSQLHE…QKKMDVTIEP (258 aa). A carboxyltransferase region spans residues 49–555; that stretch reads MKALVSQLHE…SAALNAPIQR (507 aa). Lysine 70 carries the N6-acetyllysine; alternate modification. Lysine 70 bears the N6-succinyllysine; alternate mark. Lysine 141 is subject to N6-succinyllysine. The CoA carboxyltransferase C-terminal domain occupies 309 to 555; it reads EPLFPADELY…SAALNAPIQR (247 aa). The acyl-CoA binding stretch occupies residues 343 to 372; that stretch reads RFNEFKALYGDTLVTGFARIFGYPVGIIGN. At lysine 433 the chain carries N6-succinyllysine. Lysine 495 bears the N6-acetyllysine; alternate mark. Lysine 495 is subject to N6-succinyllysine; alternate. Lysine 511 bears the N6-acetyllysine mark.

This sequence belongs to the AccD/PCCB family. As to quaternary structure, probably a dodecamer composed of six biotin-containing alpha subunits (MCCC1) and six beta (MCCC2) subunits.

The protein resides in the mitochondrion matrix. The enzyme catalyses 3-methylbut-2-enoyl-CoA + hydrogencarbonate + ATP = 3-methyl-(2E)-glutaconyl-CoA + ADP + phosphate + H(+). It participates in amino-acid degradation; L-leucine degradation; (S)-3-hydroxy-3-methylglutaryl-CoA from 3-isovaleryl-CoA: step 2/3. In terms of biological role, carboxyltransferase subunit of the 3-methylcrotonyl-CoA carboxylase, an enzyme that catalyzes the conversion of 3-methylcrotonyl-CoA to 3-methylglutaconyl-CoA, a critical step for leucine and isovaleric acid catabolism. This chain is Methylcrotonoyl-CoA carboxylase beta chain, mitochondrial (Mccc2), found in Mus musculus (Mouse).